A 305-amino-acid chain; its full sequence is Oxygen-dependent coproporphyrinogen-III oxidase (305 aa).

Position 98 (Ser98) interacts with substrate. His102 and His112 together coordinate a divalent metal cation. His112 acts as the Proton donor in catalysis. 114-116 is a binding site for substrate; sequence NVR. His151 and His181 together coordinate a divalent metal cation. The interval 246 to 281 is important for dimerization; sequence YVEFNLVYDRGTLFGLQSGGRTESILMSMPPLARWE. A substrate-binding site is contributed by 264–266; sequence GGR.

The protein belongs to the aerobic coproporphyrinogen-III oxidase family. As to quaternary structure, homodimer. A divalent metal cation serves as cofactor.

The protein localises to the cytoplasm. It catalyses the reaction coproporphyrinogen III + O2 + 2 H(+) = protoporphyrinogen IX + 2 CO2 + 2 H2O. Its pathway is porphyrin-containing compound metabolism; protoporphyrin-IX biosynthesis; protoporphyrinogen-IX from coproporphyrinogen-III (O2 route): step 1/1. Its function is as follows. Involved in the heme biosynthesis. Catalyzes the aerobic oxidative decarboxylation of propionate groups of rings A and B of coproporphyrinogen-III to yield the vinyl groups in protoporphyrinogen-IX. The protein is Oxygen-dependent coproporphyrinogen-III oxidase of Vibrio atlanticus (strain LGP32) (Vibrio splendidus (strain Mel32)).